The primary structure comprises 580 residues: Long-chain-fatty-acid--AMP ligase FadD28 (580 aa).

The disordered stretch occupies residues 421–440 (SERTFGGKIVTPSPGTPEGP).

This sequence belongs to the ATP-dependent AMP-binding enzyme family.

It catalyses the reaction holo-[mycocerosate synthase] + a long-chain fatty acid + ATP = a long-chain fatty acyl-[mycocerosate synthase] + AMP + diphosphate. The catalysed reaction is a long-chain fatty acid + ATP + H(+) = a long-chain fatty acyl-AMP + diphosphate. The enzyme catalyses holo-[mycocerosate synthase] + a long-chain fatty acyl-AMP = a long-chain fatty acyl-[mycocerosate synthase] + AMP + H(+). Its pathway is lipid metabolism; fatty acid biosynthesis. Its function is as follows. Involved in the biosynthesis of phthiocerol dimycocerosate (PDIM), a cell wall-associated lipid found only in pathogenic mycobacteria. Catalyzes the activation of long-chain fatty acids as acyl-adenylates (acyl-AMP), which are then transferred to the multifunctional polyketide synthase Mas for further chain extension. In Mycobacterium bovis (strain ATCC BAA-935 / AF2122/97), this protein is Long-chain-fatty-acid--AMP ligase FadD28 (fadD28).